Consider the following 104-residue polypeptide: DNA-directed RNA polymerase subunit omega (104 aa).

It belongs to the RNA polymerase subunit omega family. In terms of assembly, the RNAP catalytic core consists of 2 alpha, 1 beta, 1 beta' and 1 omega subunit. When a sigma factor is associated with the core the holoenzyme is formed, which can initiate transcription.

The catalysed reaction is RNA(n) + a ribonucleoside 5'-triphosphate = RNA(n+1) + diphosphate. Functionally, promotes RNA polymerase assembly. Latches the N- and C-terminal regions of the beta' subunit thereby facilitating its interaction with the beta and alpha subunits. The polypeptide is DNA-directed RNA polymerase subunit omega (Streptococcus thermophilus (strain CNRZ 1066)).